Reading from the N-terminus, the 37-residue chain is Large ribosomal subunit protein bL36A (37 aa).

This sequence belongs to the bacterial ribosomal protein bL36 family.

The protein is Large ribosomal subunit protein bL36A of Clavibacter sepedonicus (Clavibacter michiganensis subsp. sepedonicus).